Reading from the N-terminus, the 693-residue chain is Elongation factor G (693 aa).

A tr-type G domain is found at 8–282 (EKTRNIGIMA…AVIDYLPSPL (275 aa)). GTP contacts are provided by residues 17–24 (AHVDAGKT), 81–85 (DTPGH), and 135–138 (NKMD).

Belongs to the TRAFAC class translation factor GTPase superfamily. Classic translation factor GTPase family. EF-G/EF-2 subfamily.

The protein localises to the cytoplasm. Its function is as follows. Catalyzes the GTP-dependent ribosomal translocation step during translation elongation. During this step, the ribosome changes from the pre-translocational (PRE) to the post-translocational (POST) state as the newly formed A-site-bound peptidyl-tRNA and P-site-bound deacylated tRNA move to the P and E sites, respectively. Catalyzes the coordinated movement of the two tRNA molecules, the mRNA and conformational changes in the ribosome. This is Elongation factor G from Streptococcus gordonii (strain Challis / ATCC 35105 / BCRC 15272 / CH1 / DL1 / V288).